The primary structure comprises 342 residues: tRNA N6-adenosine threonylcarbamoyltransferase (342 aa).

The Fe cation site is built by His115 and His119. Substrate-binding positions include 137–141 (IVSGG), Asp170, Gly183, Asp187, and Asn276. Asp304 is a Fe cation binding site.

It belongs to the KAE1 / TsaD family. Fe(2+) is required as a cofactor.

It is found in the cytoplasm. It carries out the reaction L-threonylcarbamoyladenylate + adenosine(37) in tRNA = N(6)-L-threonylcarbamoyladenosine(37) in tRNA + AMP + H(+). Its function is as follows. Required for the formation of a threonylcarbamoyl group on adenosine at position 37 (t(6)A37) in tRNAs that read codons beginning with adenine. Is involved in the transfer of the threonylcarbamoyl moiety of threonylcarbamoyl-AMP (TC-AMP) to the N6 group of A37, together with TsaE and TsaB. TsaD likely plays a direct catalytic role in this reaction. The polypeptide is tRNA N6-adenosine threonylcarbamoyltransferase (Staphylococcus saprophyticus subsp. saprophyticus (strain ATCC 15305 / DSM 20229 / NCIMB 8711 / NCTC 7292 / S-41)).